A 483-amino-acid chain; its full sequence is Keratin, type II cytoskeletal 7 (483 aa).

Serine 2 carries the post-translational modification N-acetylserine. Serine 2, serine 6, and serine 7 each carry phosphoserine. The interval 2–107 (SVQFSSQTFS…DPQIQQVRKE (106 aa)) is head. A glycan (O-linked (GlcNAc) serine) is linked at serine 12. The interval 14–37 (SAAFPRRGGQGRLSSVSSRAGSVS) is disordered. Arginine 20 is subject to Dimethylated arginine; alternate. Arginine 20 is modified (omega-N-methylarginine; alternate). A compositionally biased stretch (low complexity) spans 25–37 (RLSSVSSRAGSVS). Phosphoserine is present on residues serine 63 and serine 88. A coil 1A region spans residues 107 to 143 (EEREQIKTLNNKFASFIDKVRFLEQQNQMLETKWRLL). One can recognise an IF rod domain in the interval 108–420 (EREQIKTLNN…KLLEGEESRL (313 aa)). At threonine 114 the chain carries Phosphothreonine. The interval 144–161 (QEQKSSKGSSLPAIFEAH) is linker 1. Residue lysine 147 forms a Glycyl lysine isopeptide (Lys-Gly) (interchain with G-Cter in SUMO2) linkage. A coil 1B region spans residues 162-253 (IANLRRQLDG…TLYEMELNEL (92 aa)). Lysine 196 is subject to N6-acetyllysine. The linker 12 stretch occupies residues 254-277 (QTQISDTSVVLSMDNSRSLDLDSI). Phosphoserine occurs at positions 269 and 271. Residues 278 to 416 (ISEVKAQYED…ATYRKLLEGE (139 aa)) are coil 2. Glycyl lysine isopeptide (Lys-Gly) (interchain with G-Cter in SUMO2) cross-links involve residues lysine 282 and lysine 303. Phosphothreonine is present on threonine 306. Glycyl lysine isopeptide (Lys-Gly) (interchain with G-Cter in SUMO2) cross-links involve residues lysine 313 and lysine 348. The tract at residues 417 to 483 (ESRLSGDGVG…TSSSRRSVRN (67 aa)) is tail.

It belongs to the intermediate filament family. In terms of assembly, heterotetramer of two type I and two type II keratins. Interacts with eukaryotic translation initiator factor 3 (eIF3) subunit EIF3S10. Interacts with GPER1. Post-translationally, arg-20 is dimethylated, probably to asymmetric dimethylarginine.

In terms of biological role, blocks interferon-dependent interphase and stimulates DNA synthesis in cells. The chain is Keratin, type II cytoskeletal 7 from Potorous tridactylus (Potoroo).